The primary structure comprises 482 residues: Glycogen synthase (482 aa).

Lys-18 contributes to the ADP-alpha-D-glucose binding site.

This sequence belongs to the glycosyltransferase 1 family. Bacterial/plant glycogen synthase subfamily.

The enzyme catalyses [(1-&gt;4)-alpha-D-glucosyl](n) + ADP-alpha-D-glucose = [(1-&gt;4)-alpha-D-glucosyl](n+1) + ADP + H(+). It functions in the pathway glycan biosynthesis; glycogen biosynthesis. Functionally, synthesizes alpha-1,4-glucan chains using ADP-glucose. The chain is Glycogen synthase from Rhodopseudomonas palustris (strain HaA2).